Here is a 545-residue protein sequence, read N- to C-terminus: Glucose-6-phosphate isomerase (545 aa).

The active-site Proton donor is the Glu-351. Residues His-382 and Lys-510 contribute to the active site.

The protein belongs to the GPI family.

The protein resides in the cytoplasm. It carries out the reaction alpha-D-glucose 6-phosphate = beta-D-fructose 6-phosphate. The protein operates within carbohydrate biosynthesis; gluconeogenesis. It functions in the pathway carbohydrate degradation; glycolysis; D-glyceraldehyde 3-phosphate and glycerone phosphate from D-glucose: step 2/4. Functionally, catalyzes the reversible isomerization of glucose-6-phosphate to fructose-6-phosphate. This Helicobacter acinonychis (strain Sheeba) protein is Glucose-6-phosphate isomerase.